Consider the following 116-residue polypeptide: Protein BIC2 (116 aa).

Disordered stretches follow at residues 1 to 33 (MKNT…TCFP) and 95 to 116 (DSGD…ESSC).

The protein resides in the nucleus. Its function is as follows. Regulates the blue-light dependent dimerization of CRY2 and formation of photobodies. Inhibits CRY phosphorylation. The polypeptide is Protein BIC2 (Arabidopsis thaliana (Mouse-ear cress)).